Here is a 272-residue protein sequence, read N- to C-terminus: Acidic leucine-rich nuclear phosphoprotein 32 family member B (272 aa).

LRR repeat units follow at residues 18–38 (AVRELVLDNCKAMDGKIEGLT), 43–64 (NLEFLSLISVGLFSVSDLPKLP), 65–87 (KLKKLELSENRIFGGLDRLAEEL), and 89–110 (SLTHLNLSGNNLKDISTLEPLK). Positions 123–161 (CEVTNRSDYRETVFRLLPQLSYLDGYDREDQEAPDSDVE) constitute an LRRCT domain. Positions 149–254 (DREDQEAPDS…DEDEDEEEEE (106 aa)) are enriched in acidic residues. Residues 149-272 (DREDQEAPDS…RETDDEGEDD (124 aa)) are disordered. Phosphoserine occurs at positions 164 and 171. Positions 255–265 (SGKGEKRKRET) are enriched in basic and acidic residues. The short motif at 260–263 (KRKR) is the Nuclear localization signal element. Threonine 265 carries the phosphothreonine modification.

It belongs to the ANP32 family. As to quaternary structure, interacts with histones H3 and H4. Interacts with KLF5; this interaction induces promoter region-specific histone incorporation and inhibition of histone acetylation by ANP32B. Post-translationally, some glutamate residues are glycylated by TTLL8. This modification occurs exclusively on glutamate residues and results in a glycine chain on the gamma-carboxyl group. In terms of processing, directly cleaved by caspase-3/CASP3.

It localises to the nucleus. In terms of biological role, multifunctional protein that is involved in the regulation of many processes including cell proliferation, apoptosis, cell cycle progression or transcription. Regulates the proliferation of neuronal stem cells, differentiation of leukemic cells and progression from G1 to S phase of the cell cycle. As negative regulator of caspase-3-dependent apoptosis, may act as an antagonist of ANP32A in regulating tissue homeostasis. Exhibits histone chaperone properties, able to recruit histones to certain promoters, thus regulating the transcription of specific genes. Also plays an essential role in the nucleocytoplasmic transport of specific mRNAs via the uncommon nuclear mRNA export receptor XPO1/CRM1. Participates in the regulation of adequate adaptive immune responses by acting on mRNA expression and cell proliferation. The protein is Acidic leucine-rich nuclear phosphoprotein 32 family member B (Anp32b) of Mus musculus (Mouse).